Consider the following 779-residue polypeptide: MDSCEEECDLEVDSDEEDQLFGEKCISLLSSLLPLSSSTLLSNAINLELDEVERPPPLLNVLEEQQFPKVCANIEEENELEADTEEDIAETADDEESKDPVEKTENFEPSVTMDTYDFPDPYPVQIRARPQVPPKPPIDTVRYSMNNIKESADWQLDELLEELEALETQLNSSNGGDQLLLGVSGIPASSSRENVKSISTLPPPPPALSYHQTPQQPQLLHHHNNHLGYQNGIHQITSINSAASSCSSPDGDSAFGDSSSTESSNNRCRNSAFSSNDSCRDSLNTPSPTQVSPRNGELNAEEAKAQKIRQALEKMKEAKVTKIFVKFFVEDGEALQLLIDERWTVADTLKQLAEKNHIALMEDHCIVEEYPELYIKRVYEDHEKVVENIQMWVQDSPNKLYFMRRPDKYAFISRPELYLLTPKTSDHMEIPSGDQWTIDVKQKFVSEYFHREPVVPPEMEGFLYLKSDGRKSWKKHYFVLRPSGLYYAPKSKKPTTKDLTCLMNLHSNQVYTGIGWEKKYKSPTPWCISIKLTALQMKRSQFIKYICAEDEMTFKKWLVALRIAKNGAELLENYERACQIRRETLGPASSMSAASSSTAISEVPHSLSHHQRTPSVASSIQLSSHMMNNPTHPLSVNVRNQSPASFSVNSCQQSHPSRTSAKLEIQYDEQPTGTIKRAPLDVLRRVSRASTSSPTIPQEESDSDEEFPAPPPVASVMRMPPPVTPPKPCTPLTSKKAPPPPPKRSDTTKLQSASPMAPAKNDLEAALARRREKMATMEC.

Acidic residues predominate over residues asparagine 78–serine 97. 3 disordered regions span residues asparagine 78 to glutamate 105, serine 189 to proline 217, and alanine 242 to glutamate 302. A compositionally biased stretch (polar residues) spans serine 189–threonine 200. Residues alanine 242–alanine 254 are compositionally biased toward low complexity. Polar residues predominate over residues glycine 256–proline 293. Positions glutamate 317–aspartate 407 constitute a Ras-associating domain. In terms of domain architecture, PH spans proline 456–asparagine 566. Polar residues-rich tracts occupy residues serine 645 to serine 660 and arginine 688 to glutamine 698. The disordered stretch occupies residues serine 645–leucine 763. The span at proline 708 to cysteine 729 shows a compositional bias: pro residues.

It belongs to the MRL family. As to quaternary structure, may interact (via Ras-associating and PH domains) with ced-10 (GTP-bound form).

It localises to the perikaryon. Required cell non-autonomously for proper development of the excretory canals and for the long-range anterior-posterior migrations of embryonic neurons CAN, ALM and HSN. Plays a role, probably downstream of ced-10/rac1, in orientating axonal growth of HSN and AVM neurons in response to guidance cues such as slt-1. May regulate growth cone polarization by promoting asymmetric F-actin assembly. May be involved in signal transduction during cell migration. This is Abnormal cell migration protein 10 from Caenorhabditis elegans.